The following is a 132-amino-acid chain: Small ribosomal subunit protein uS8 (132 aa).

Belongs to the universal ribosomal protein uS8 family. Part of the 30S ribosomal subunit. Contacts proteins S5 and S12.

In terms of biological role, one of the primary rRNA binding proteins, it binds directly to 16S rRNA central domain where it helps coordinate assembly of the platform of the 30S subunit. This is Small ribosomal subunit protein uS8 from Francisella tularensis subsp. tularensis (strain FSC 198).